Here is a 180-residue protein sequence, read N- to C-terminus: Nucleoside triphosphate/diphosphate phosphatase (180 aa).

Arginine 26 (proton donor) is an active-site residue. The Mg(2+) site is built by asparagine 90, aspartate 106, aspartate 108, aspartate 110, aspartate 123, and glutamate 126.

The protein belongs to the Ntdp family. The cofactor is Mg(2+).

It catalyses the reaction a ribonucleoside 5'-triphosphate + H2O = a ribonucleoside 5'-diphosphate + phosphate + H(+). It carries out the reaction a ribonucleoside 5'-diphosphate + H2O = a ribonucleoside 5'-phosphate + phosphate + H(+). Its function is as follows. Has nucleoside phosphatase activity towards nucleoside triphosphates and nucleoside diphosphates. The protein is Nucleoside triphosphate/diphosphate phosphatase of Staphylococcus saprophyticus subsp. saprophyticus (strain ATCC 15305 / DSM 20229 / NCIMB 8711 / NCTC 7292 / S-41).